Here is a 431-residue protein sequence, read N- to C-terminus: Nuclear receptor subfamily 1 group I member 2 (431 aa).

NR C4-type zinc fingers lie at residues 38 to 58 (CRVCGDKANGYHFNVMTCEGC) and 74 to 99 (CPFRKGTCEITRKTRRQCQACRLRKC). Positions 38-104 (CRVCGDKANG…RLRKCLESGM (67 aa)) form a DNA-binding region, nuclear receptor. The Bipartite nuclear localization signal signature appears at 63 to 89 (RRAMKRNVRLRCPFRKGTCEITRKTRR). Positions 105–142 (KKEMIMSDAAVEQRRALIKRKKREKIEAPPPGGQGLTE) are hinge. An NR LBD domain is found at 143 to 430 (EQQALIQELM…LMQELFSSTD (288 aa)). Hyperforin contacts are provided by residues Ser244 and 282–285 (ILRF).

This sequence belongs to the nuclear hormone receptor family. NR1 subfamily. In terms of assembly, heterodimer with RXRA. Interacts with NCOA1. Interacts (via domain NR LBD) with CRY1 and CRY2 in a ligand-dependent manner.

The protein resides in the nucleus. Its function is as follows. Nuclear receptor that binds and is activated by a variety of endogenous and xenobiotic compounds. Transcription factor that activates the transcription of multiple genes involved in the metabolism and secretion of potentially harmful xenobiotics, endogenous compounds and drugs. Response to specific ligands is species-specific, due to differences in the ligand-binding domain. Activated by naturally occurring steroids, such as pregnenolone and progesterone. Binds to a response element in the promoters of the CYP3A4 and ABCB1/MDR1 genes. The chain is Nuclear receptor subfamily 1 group I member 2 (Nr1i2) from Rattus norvegicus (Rat).